The primary structure comprises 170 residues: Tachykinin-4 (170 aa).

The N-terminal stretch at 1–16 (MLPLLALFLLIGPAVS) is a signal peptide. Residues 17–54 (TTTRDREDLTFGAEAESWVTVNLKGIPVPSIELKLQEL) constitute a propeptide that is removed on maturation. Methionine 66 carries the methionine amide modification. Positions 67–170 (GKRVEGVHPI…SQMMPRPSRP (104 aa)) are excised as a propeptide. The disordered stretch occupies residues 107 to 170 (QETNHQSAGP…SQMMPRPSRP (64 aa)). Polar residues predominate over residues 123 to 140 (SLQSQRGRSEPPNHQQHV).

It belongs to the tachykinin family.

It localises to the secreted. In terms of biological role, tachykinins are active peptides which excite neurons, evoke behavioral responses, are potent vasodilators and secretagogues, and contract (directly or indirectly) many smooth muscles. Hemokinin induces plasma extravasation, mast cell degranulation, muscle contraction, salivary secretion and scratching behavior. Increases sperm motility. Induces potent analgesic effects and may play a role in pain modulation. Promotes survival of bone marrow B lineage cells and of cultured LPS-stimulated pre-B cells and may act as an autocrine factor required for B-cell survival and proliferation. Lowers systemic arterial pressure following intravenous injection. Induces interferon-gamma production and may play a role in the inflammatory response. Shows potent affinity and specificity for the NK-1 receptor. The sequence is that of Tachykinin-4 from Rattus norvegicus (Rat).